We begin with the raw amino-acid sequence, 762 residues long: Primary amine oxidase, liver isozyme (762 aa).

Residues 1–16 form the signal peptide; that stretch reads MFIFIFLSLWTLLVMG. A disordered region spans residues 23–54; that stretch reads GSEEGVGKQCHPSLPPRCPSRSPSDQPWTHPD. N-linked (GlcNAc...) asparagine glycosylation occurs at Asn-136. Cys-197 and Cys-198 are joined by a disulfide. Residue Asn-231 is glycosylated (N-linked (GlcNAc...) asparagine). Position 383-393 (383-393) interacts with substrate; the sequence is YMDSGFGMGYF. The active-site Proton acceptor is Asp-385. Residues Cys-403 and Cys-429 are joined by a disulfide bond. 467 to 472 is a binding site for substrate; it reads MLNYDY. Residue Tyr-470 is the Schiff-base intermediate with substrate; via topaquinone of the active site. At Tyr-470 the chain carries 2',4',5'-topaquinone. Cu cation-binding residues include His-519 and His-521. Positions 528, 529, 530, 571, 662, and 664 each coordinate Ca(2+). Asn-665 carries an N-linked (GlcNAc...) asparagine glycan. Residues Glu-666, Asp-672, and Leu-673 each coordinate Ca(2+). Cu cation is bound at residue His-683. A disulfide bridge links Cys-733 with Cys-740.

It belongs to the copper/topaquinone oxidase family. As to quaternary structure, homodimer; disulfide-linked. Cu cation serves as cofactor. Ca(2+) is required as a cofactor. It depends on L-topaquinone as a cofactor. Topaquinone (TPQ) is generated by copper-dependent autoxidation of a specific tyrosyl residue. Liver.

The protein resides in the secreted. Its subcellular location is the extracellular space. It carries out the reaction a primary methyl amine + O2 + H2O = an aldehyde + H2O2 + NH4(+). This is Primary amine oxidase, liver isozyme from Bos taurus (Bovine).